The primary structure comprises 207 residues: C-type lectin domain family 2 member D11 (207 aa).

Topologically, residues 1-44 (MSAKKASQPMLNTTGSLQEGEMGKMFHGKCLRIVSPESPAKLYC) are cytoplasmic. Phosphoserine is present on residues Ser7 and Ser16. A helical; Signal-anchor for type II membrane protein transmembrane segment spans residues 45–65 (CYGVIMVLSVAVVALSVALSV). The Extracellular portion of the chain corresponds to 66-207 (KMTPQISTIN…LQCKTPFSPM (142 aa)). In terms of domain architecture, C-type lectin spans 87–198 (VGNKCFYFSE…SCSKLNSYSL (112 aa)). N-linked (GlcNAc...) asparagine glycosylation is present at Asn100.

It localises to the cell membrane. Its function is as follows. Receptor for KLRB1B that protects target cells against natural killer cell-mediated lysis. The sequence is that of C-type lectin domain family 2 member D11 (Clec2d11) from Rattus norvegicus (Rat).